We begin with the raw amino-acid sequence, 251 residues long: UPF0246 protein PEPE_1842 (251 aa).

It belongs to the UPF0246 family.

The chain is UPF0246 protein PEPE_1842 from Pediococcus pentosaceus (strain ATCC 25745 / CCUG 21536 / LMG 10740 / 183-1w).